The chain runs to 258 residues: Ribosomal RNA small subunit methyltransferase A (258 aa).

6 residues coordinate S-adenosyl-L-methionine: histidine 13, leucine 15, glycine 41, aspartate 63, aspartate 87, and asparagine 106.

The protein belongs to the class I-like SAM-binding methyltransferase superfamily. rRNA adenine N(6)-methyltransferase family. RsmA subfamily.

The protein resides in the cytoplasm. It carries out the reaction adenosine(1518)/adenosine(1519) in 16S rRNA + 4 S-adenosyl-L-methionine = N(6)-dimethyladenosine(1518)/N(6)-dimethyladenosine(1519) in 16S rRNA + 4 S-adenosyl-L-homocysteine + 4 H(+). Specifically dimethylates two adjacent adenosines (A1518 and A1519) in the loop of a conserved hairpin near the 3'-end of 16S rRNA in the 30S particle. May play a critical role in biogenesis of 30S subunits. The polypeptide is Ribosomal RNA small subunit methyltransferase A (Cytophaga hutchinsonii (strain ATCC 33406 / DSM 1761 / CIP 103989 / NBRC 15051 / NCIMB 9469 / D465)).